A 128-amino-acid chain; its full sequence is Large ribosomal subunit protein bL12 (128 aa).

It belongs to the bacterial ribosomal protein bL12 family. As to quaternary structure, homodimer. Part of the ribosomal stalk of the 50S ribosomal subunit. Forms a multimeric L10(L12)X complex, where L10 forms an elongated spine to which 2 to 4 L12 dimers bind in a sequential fashion. Binds GTP-bound translation factors.

Its function is as follows. Forms part of the ribosomal stalk which helps the ribosome interact with GTP-bound translation factors. Is thus essential for accurate translation. This Phenylobacterium zucineum (strain HLK1) protein is Large ribosomal subunit protein bL12.